The chain runs to 116 residues: Iron-sulfur cluster insertion protein ErpA (116 aa).

Residues Cys44, Cys108, and Cys110 each contribute to the iron-sulfur cluster site.

This sequence belongs to the HesB/IscA family. As to quaternary structure, homodimer. Iron-sulfur cluster is required as a cofactor.

Its function is as follows. Required for insertion of 4Fe-4S clusters for at least IspG. In Shewanella baltica (strain OS223), this protein is Iron-sulfur cluster insertion protein ErpA.